Here is a 305-residue protein sequence, read N- to C-terminus: Tyrosine recombinase XerD (305 aa).

A Core-binding (CB) domain is found at 2–87 (SQGEAWADAF…AVRQFYRFVL (86 aa)). In terms of domain architecture, Tyr recombinase spans 108–295 (PLPKVLERDE…AGEHLAHIVQ (188 aa)). Active-site residues include arginine 149, lysine 173, histidine 247, arginine 250, and histidine 273. Residue tyrosine 282 is the O-(3'-phospho-DNA)-tyrosine intermediate of the active site.

This sequence belongs to the 'phage' integrase family. XerD subfamily. Forms a cyclic heterotetrameric complex composed of two molecules of XerC and two molecules of XerD.

The protein localises to the cytoplasm. Site-specific tyrosine recombinase, which acts by catalyzing the cutting and rejoining of the recombining DNA molecules. The XerC-XerD complex is essential to convert dimers of the bacterial chromosome into monomers to permit their segregation at cell division. It also contributes to the segregational stability of plasmids. This Caulobacter vibrioides (strain ATCC 19089 / CIP 103742 / CB 15) (Caulobacter crescentus) protein is Tyrosine recombinase XerD.